The chain runs to 405 residues: Tryptophan synthase beta chain (405 aa).

Residue Lys-95 is modified to N6-(pyridoxal phosphate)lysine.

This sequence belongs to the TrpB family. In terms of assembly, tetramer of two alpha and two beta chains. Pyridoxal 5'-phosphate serves as cofactor.

The catalysed reaction is (1S,2R)-1-C-(indol-3-yl)glycerol 3-phosphate + L-serine = D-glyceraldehyde 3-phosphate + L-tryptophan + H2O. It participates in amino-acid biosynthesis; L-tryptophan biosynthesis; L-tryptophan from chorismate: step 5/5. Its function is as follows. The beta subunit is responsible for the synthesis of L-tryptophan from indole and L-serine. This Pseudomonas putida (strain ATCC 47054 / DSM 6125 / CFBP 8728 / NCIMB 11950 / KT2440) protein is Tryptophan synthase beta chain.